A 358-amino-acid polypeptide reads, in one-letter code: Membrane-bound lytic murein transglycosylase C (358 aa).

The N-terminal stretch at 1-16 (MKKILALLVIAPLLVS) is a signal peptide. Residue Cys-17 is the site of N-palmitoyl cysteine attachment. Cys-17 carries the S-diacylglycerol cysteine lipid modification.

The protein belongs to the transglycosylase Slt family.

It localises to the cell outer membrane. It carries out the reaction Exolytic cleavage of the (1-&gt;4)-beta-glycosidic linkage between N-acetylmuramic acid (MurNAc) and N-acetylglucosamine (GlcNAc) residues in peptidoglycan, from either the reducing or the non-reducing ends of the peptidoglycan chains, with concomitant formation of a 1,6-anhydrobond in the MurNAc residue.. In terms of biological role, murein-degrading enzyme. May play a role in recycling of muropeptides during cell elongation and/or cell division. This Yersinia enterocolitica serotype O:8 / biotype 1B (strain NCTC 13174 / 8081) protein is Membrane-bound lytic murein transglycosylase C.